Consider the following 521-residue polypeptide: Protein nucleotidyltransferase YdiU (521 aa).

Residues Gly-109, Gly-111, Arg-112, Lys-131, Asp-143, Gly-144, Arg-194, and Arg-201 each coordinate ATP. The Proton acceptor role is filled by Asp-270. Asn-271 and Asp-280 together coordinate Mg(2+). Position 280 (Asp-280) interacts with ATP.

It belongs to the SELO family. Mg(2+) serves as cofactor. The cofactor is Mn(2+).

The enzyme catalyses L-seryl-[protein] + ATP = 3-O-(5'-adenylyl)-L-seryl-[protein] + diphosphate. It carries out the reaction L-threonyl-[protein] + ATP = 3-O-(5'-adenylyl)-L-threonyl-[protein] + diphosphate. It catalyses the reaction L-tyrosyl-[protein] + ATP = O-(5'-adenylyl)-L-tyrosyl-[protein] + diphosphate. The catalysed reaction is L-histidyl-[protein] + UTP = N(tele)-(5'-uridylyl)-L-histidyl-[protein] + diphosphate. The enzyme catalyses L-seryl-[protein] + UTP = O-(5'-uridylyl)-L-seryl-[protein] + diphosphate. It carries out the reaction L-tyrosyl-[protein] + UTP = O-(5'-uridylyl)-L-tyrosyl-[protein] + diphosphate. In terms of biological role, nucleotidyltransferase involved in the post-translational modification of proteins. It can catalyze the addition of adenosine monophosphate (AMP) or uridine monophosphate (UMP) to a protein, resulting in modifications known as AMPylation and UMPylation. The protein is Protein nucleotidyltransferase YdiU of Burkholderia pseudomallei (strain 1106a).